The following is a 143-amino-acid chain: Cell division protein SepF (143 aa).

This sequence belongs to the SepF family. As to quaternary structure, homodimer. Interacts with FtsZ.

Its subcellular location is the cytoplasm. Cell division protein that is part of the divisome complex and is recruited early to the Z-ring. Probably stimulates Z-ring formation, perhaps through the cross-linking of FtsZ protofilaments. Its function overlaps with FtsA. The sequence is that of Cell division protein SepF from Geobacillus thermodenitrificans (strain NG80-2).